Here is a 567-residue protein sequence, read N- to C-terminus: Low-affinity glucose transporter (567 aa).

The segment covering 1 to 24 (MSNQMTDSTSAGSGTEHSVDTNTA) has biased composition (polar residues). The interval 1 to 36 (MSNQMTDSTSAGSGTEHSVDTNTALKAGSPNDLKVS) is disordered. The Cytoplasmic segment spans residues 18-62 (SVDTNTALKAGSPNDLKVSHEEDLNDLEKTAEETLQQKPAKEYIF). The helical transmembrane segment at 63-83 (VSLCCVMVAFGGFVFGWDTGT) threads the bilayer. The Extracellular segment spans residues 84–113 (ISGFVNQTDFLRRFGQEKADGSHYLSNVRT). N89 carries an N-linked (GlcNAc...) asparagine glycan. The helical transmembrane segment at 114-134 (GLIVSIFNIGCAVGGIVLSNI) threads the bilayer. At 135 to 141 (GDRWGRR) the chain is on the cytoplasmic side. The helical transmembrane segment at 142–162 (IGLITVIIIYVIGIIIQIASV) threads the bilayer. At 163–167 (DKWYQ) the chain is on the extracellular side. A helical membrane pass occupies residues 168 to 188 (YFIGRIISGLGVGGITVLSPM). Residues 189 to 199 (LISETAPKHLR) lie on the Cytoplasmic side of the membrane. Residues 200–220 (GTLVSCYQLMITFGIFLGYCT) form a helical membrane-spanning segment. Residues 221–234 (NYGTKNYSNSVQWR) lie on the Extracellular side of the membrane. The chain crosses the membrane as a helical span at residues 235–255 (VPLGLCFAWAIFMVLGMMFVP). Residues 256 to 334 (ESARFLVETD…MGIMIQSLQQ (79 aa)) lie on the Cytoplasmic side of the membrane. A helical membrane pass occupies residues 335–354 (LTGDNYFFYYGTTIFQSVGM). At 355–358 (DDSF) the chain is on the extracellular side. Residues 359–379 (ETSIVLGIVNFASTFFALYTV) traverse the membrane as a helical segment. Residues 380 to 386 (DHFGRRN) lie on the Cytoplasmic side of the membrane. Residues 387 to 407 (CLLYGCVGMVACYVVYASVGV) traverse the membrane as a helical segment. Topologically, residues 408–429 (TRLWPDGPDHPDISSKGAGNCM) are extracellular. The helical transmembrane segment at 430–450 (IVFACFYIFCFATTWAPIAYV) threads the bilayer. Residues 451–466 (VISESYPLRVKGKAMA) are Cytoplasmic-facing. A helical transmembrane segment spans residues 467-487 (IASASNWIWGFLIGFFTPFIT). Residues 488-493 (SAIHFY) are Extracellular-facing. A helical transmembrane segment spans residues 494–514 (YGYVFMGCMVFAFFYVYFFVP). The Cytoplasmic portion of the chain corresponds to 515–567 (ETKGLTLEEVNEMYSEGVLPWKSSSWVPSSRRGAEYDVDALQHDDKPWYKAML).

Belongs to the major facilitator superfamily. Sugar transporter (TC 2.A.1.1) family.

The protein localises to the membrane. Its function is as follows. Low-affinity glucose transporter. The sequence is that of Low-affinity glucose transporter (RAG1) from Kluyveromyces lactis (strain ATCC 8585 / CBS 2359 / DSM 70799 / NBRC 1267 / NRRL Y-1140 / WM37) (Yeast).